Here is a 611-residue protein sequence, read N- to C-terminus: Probable cysteine desulfurase 1 (611 aa).

The interval 1–208 (MRATQLYAAS…HEMVDVFDIQ (208 aa)) is cargo-loading domain. N6-(pyridoxal phosphate)lysine is present on lysine 428. Cysteine 566 serves as the catalytic Cysteine persulfide intermediate.

This sequence belongs to the class-V pyridoxal-phosphate-dependent aminotransferase family. Csd subfamily. As to quaternary structure, there are 1-2 copies of this protein in each type 2A encapsulin shell. Pyridoxal 5'-phosphate is required as a cofactor.

The protein localises to the encapsulin nanocompartment. The enzyme catalyses (sulfur carrier)-H + L-cysteine = (sulfur carrier)-SH + L-alanine. Cargo protein of a type 2A encapsulin nanocompartment involved in sulfur metabolism. Cysteine desulfurases mobilize the sulfur from L-cysteine to yield L-alanine, an essential step in sulfur metabolism for biosynthesis of a variety of sulfur-containing biomolecules. The protein is Probable cysteine desulfurase 1 of Mycobacterium leprae (strain TN).